The following is a 128-amino-acid chain: Small ribosomal subunit protein bS16 (128 aa).

Residues 107–128 (AAEAKAAAANESDDSGTDSTES) are disordered. The span at 117-128 (ESDDSGTDSTES) shows a compositional bias: acidic residues.

It belongs to the bacterial ribosomal protein bS16 family.

In Synechococcus sp. (strain CC9311), this protein is Small ribosomal subunit protein bS16.